Reading from the N-terminus, the 1167-residue chain is ATP-dependent helicase/nuclease subunit A (1167 aa).

The UvrD-like helicase ATP-binding domain occupies 2–451; it reads KNWTAEQMRA…IELSLNFRSR (450 aa). 23–30 lines the ATP pocket; sequence AAAGAGKT. The 291-residue stretch at 478–768 folds into the UvrD-like helicase C-terminal domain; the sequence is KAFLKKGADY…RVMSVHKSKG (291 aa).

This sequence belongs to the helicase family. AddA subfamily. Heterodimer of AddA and AddB/RexB. Mg(2+) is required as a cofactor.

It carries out the reaction Couples ATP hydrolysis with the unwinding of duplex DNA by translocating in the 3'-5' direction.. The enzyme catalyses ATP + H2O = ADP + phosphate + H(+). In terms of biological role, the heterodimer acts as both an ATP-dependent DNA helicase and an ATP-dependent, dual-direction single-stranded exonuclease. Recognizes the chi site generating a DNA molecule suitable for the initiation of homologous recombination. The AddA nuclease domain is required for chi fragment generation; this subunit has the helicase and 3' -&gt; 5' nuclease activities. The sequence is that of ATP-dependent helicase/nuclease subunit A from Carboxydothermus hydrogenoformans (strain ATCC BAA-161 / DSM 6008 / Z-2901).